The following is a 336-amino-acid chain: DNA-directed RNA polymerase subunit alpha (336 aa).

Positions methionine 1–asparagine 226 are alpha N-terminal domain (alpha-NTD). Positions alanine 241–leucine 336 are alpha C-terminal domain (alpha-CTD).

Belongs to the RNA polymerase alpha chain family. Homodimer. The RNAP catalytic core consists of 2 alpha, 1 beta, 1 beta' and 1 omega subunit. When a sigma factor is associated with the core the holoenzyme is formed, which can initiate transcription.

The catalysed reaction is RNA(n) + a ribonucleoside 5'-triphosphate = RNA(n+1) + diphosphate. DNA-dependent RNA polymerase catalyzes the transcription of DNA into RNA using the four ribonucleoside triphosphates as substrates. The polypeptide is DNA-directed RNA polymerase subunit alpha (Arthrobacter sp. (strain FB24)).